Here is a 150-residue protein sequence, read N- to C-terminus: Large ribosomal subunit protein bL9 (150 aa).

Belongs to the bacterial ribosomal protein bL9 family.

Functionally, binds to the 23S rRNA. In Shewanella oneidensis (strain ATCC 700550 / JCM 31522 / CIP 106686 / LMG 19005 / NCIMB 14063 / MR-1), this protein is Large ribosomal subunit protein bL9.